Here is a 512-residue protein sequence, read N- to C-terminus: Glutathione-binding protein GsiB (512 aa).

An N-terminal signal peptide occupies residues 1 to 26 (MARAVHRSGLVALGIATALMASCAFA).

This sequence belongs to the bacterial solute-binding protein 5 family. The complex is composed of two ATP-binding proteins (GsiA), two transmembrane proteins (GsiC and GsiD) and a solute-binding protein (GsiB).

Its subcellular location is the periplasm. Its function is as follows. Part of the ABC transporter complex GsiABCD involved in glutathione import. Binds glutathione. The polypeptide is Glutathione-binding protein GsiB (Shigella flexneri).